Reading from the N-terminus, the 513-residue chain is ATP synthase subunit alpha (513 aa).

ATP is bound at residue 169–176 (GDRQIGKT).

It belongs to the ATPase alpha/beta chains family. In terms of assembly, F-type ATPases have 2 components, CF(1) - the catalytic core - and CF(0) - the membrane proton channel. CF(1) has five subunits: alpha(3), beta(3), gamma(1), delta(1), epsilon(1). CF(0) has three main subunits: a(1), b(2) and c(9-12). The alpha and beta chains form an alternating ring which encloses part of the gamma chain. CF(1) is attached to CF(0) by a central stalk formed by the gamma and epsilon chains, while a peripheral stalk is formed by the delta and b chains.

It localises to the cell inner membrane. It catalyses the reaction ATP + H2O + 4 H(+)(in) = ADP + phosphate + 5 H(+)(out). Functionally, produces ATP from ADP in the presence of a proton gradient across the membrane. The alpha chain is a regulatory subunit. This is ATP synthase subunit alpha from Francisella tularensis subsp. holarctica (strain OSU18).